The chain runs to 909 residues: DNA mismatch repair protein MutS (909 aa).

Residue 614 to 621 participates in ATP binding; the sequence is GPNMAGKS. The disordered stretch occupies residues 798–827; that stretch reads LEENSPQNNDISKESSSSSNSHDKLESSVI. Positions 818 to 827 are enriched in basic and acidic residues; the sequence is SHDKLESSVI.

This sequence belongs to the DNA mismatch repair MutS family.

In terms of biological role, this protein is involved in the repair of mismatches in DNA. It is possible that it carries out the mismatch recognition step. This protein has a weak ATPase activity. The chain is DNA mismatch repair protein MutS from Clostridium novyi (strain NT).